Reading from the N-terminus, the 374-residue chain is N5-carboxyaminoimidazole ribonucleotide synthase (374 aa).

Residues R108, K148, 153-159 (GYDGKGQ), 183-186 (EKYL), E191, H214, and 266-267 (NE) contribute to the ATP site. The region spanning 112–296 (KETLKSAGTK…QFDTHILAVT (185 aa)) is the ATP-grasp domain.

It belongs to the PurK/PurT family. Homodimer.

It carries out the reaction 5-amino-1-(5-phospho-beta-D-ribosyl)imidazole + hydrogencarbonate + ATP = 5-carboxyamino-1-(5-phospho-D-ribosyl)imidazole + ADP + phosphate + 2 H(+). The protein operates within purine metabolism; IMP biosynthesis via de novo pathway; 5-amino-1-(5-phospho-D-ribosyl)imidazole-4-carboxylate from 5-amino-1-(5-phospho-D-ribosyl)imidazole (N5-CAIR route): step 1/2. Functionally, catalyzes the ATP-dependent conversion of 5-aminoimidazole ribonucleotide (AIR) and HCO(3)(-) to N5-carboxyaminoimidazole ribonucleotide (N5-CAIR). The polypeptide is N5-carboxyaminoimidazole ribonucleotide synthase (Staphylococcus aureus (strain Mu50 / ATCC 700699)).